A 691-amino-acid chain; its full sequence is POU domain, class 6, transcription factor 2 (691 aa).

Disordered stretches follow at residues 1 to 61 (MIAG…RGNT), 188 to 297 (QQQQ…LQLV), and 435 to 461 (GQAA…SALS). The span at 17-28 (MNAELRGEDKAA) shows a compositional bias: basic and acidic residues. Composition is skewed to low complexity over residues 188 to 197 (QQQQQQQQQQ) and 206 to 216 (QHPQPASQAPP). Residues 217–237 (QSQPTPPHQPPPASQQLPAPP) are compositionally biased toward pro residues. Over residues 238–272 (AQLEQATQPQQHQPHSHPQNQTQNQPSPTQQSSSP) the composition is skewed to low complexity. Over residues 437 to 447 (AATSHSPVRQA) the composition is skewed to polar residues. Positions 448–458 (SSSSSSSSSSS) are enriched in low complexity. In terms of domain architecture, POU-specific spans 476–586 (VDGVNLEEIR…VLERWMAEAE (111 aa)). Positions 607 to 666 (KRKRRTSFTPQALEILNAHFEKNTHPSGQEMTEIAEKLNYDREVVRVWFCNKRQALKNTI) form a DNA-binding region, homeobox. The interval 670–691 (KQHEPTSAAPLEPLADSPEENC) is disordered.

Belongs to the POU transcription factor family. Class-6 subfamily. As to expression, expressed in kidney, heart, muscle, spleen and ovary, but not in lung.

It is found in the nucleus. Probable transcription factor likely to be involved in early steps in the differentiation of amacrine and ganglion cells. Recognizes and binds to the DNA sequence 5'-ATGCAAAT-3'. In Mus musculus (Mouse), this protein is POU domain, class 6, transcription factor 2 (Pou6f2).